The following is a 93-amino-acid chain: DNA/RNA-binding protein Alba (93 aa).

At K11 the chain carries N6-acetyllysine.

It belongs to the histone-like Alba family. In terms of processing, acetylated. Acetylation at Lys-11 decreases DNA-binding affinity.

The protein localises to the cytoplasm. It is found in the chromosome. Its function is as follows. Binds double-stranded DNA tightly but without sequence specificity. Involved in DNA compaction. This Pyrococcus abyssi (strain GE5 / Orsay) protein is DNA/RNA-binding protein Alba.